Reading from the N-terminus, the 271-residue chain is WUSCHEL-related homeobox 6 (271 aa).

A DNA-binding region (homeobox; WUS-type) is located at residues 57–121 (AATLRWNPTP…NHKARERLKR (65 aa)). The segment at 118 to 195 (RLKRRRREGG…TEESDQRASE (78 aa)) is disordered. Basic and acidic residues-rich tracts occupy residues 132–148 (PHKD…RVDQ) and 180–195 (NEDH…RASE).

It belongs to the WUS homeobox family. As to expression, highly expressed in developing ovules. Present in developing primordia and differentiating organs but absent in mature organs.

The protein localises to the nucleus. Functionally, transcription factor that plays a central role in ovule patterning by regulating cell proliferation of the maternal integuments and differentiation of the maegaspore mother cell (MCC). Involved in AGAMOUS (AG) repression in leaves. The polypeptide is WUSCHEL-related homeobox 6 (WOX6) (Arabidopsis thaliana (Mouse-ear cress)).